Consider the following 150-residue polypeptide: Large ribosomal subunit protein bL9 (150 aa).

The protein belongs to the bacterial ribosomal protein bL9 family.

Its function is as follows. Binds to the 23S rRNA. In Shewanella loihica (strain ATCC BAA-1088 / PV-4), this protein is Large ribosomal subunit protein bL9.